A 270-amino-acid polypeptide reads, in one-letter code: MEKLSAASGYSDVTDSKAMGPLAVGCLTKCSHAFHLLCLLAMYCNGNKGPEHPNPGKPFTARGFPASATFQTTPGPQASRGFQNPETLADIPASPQLLTDGHYMTLPVSPDQLPCDDPMAGSGGAPVLRVGHDHGCHQQPRICNAPLPGPGPYRTEPAKAIKPIDRKSVHQICSGPVVLSLSTAVKELVENSLDAGATNIDLKLKDYGMDLIEVSGNGCGVEEENFEGLMMSPFLPATSRRRLGLDWCLITMGKSSRRPPTPTPEGPQSA.

The protein belongs to the DNA mismatch repair MutL/HexB family.

This is Putative postmeiotic segregation increased 2-like protein 11 (PMS2P11) from Homo sapiens (Human).